The sequence spans 427 residues: Transcription factor MYB98 (427 aa).

The Nuclear localization signal 1 motif lies at 195–202 (TRKLSSSS). HTH myb-type domains follow at residues 212-267 (KSTL…RPDI) and 268-318 (KKET…RRQF). DNA-binding regions (H-T-H motif) lie at residues 240 to 263 (WSHI…HNHL) and 291 to 314 (WAEI…NATK). The Nuclear localization signal 2 signature appears at 361–368 (NKKKDVVV).

Expressed at high levels in the synergid cells of the female gametophyte, and at lower levels in the endosperm of young seeds and the trichomes of young leaves and sepals.

The protein localises to the nucleus. Transcription factor that binds to the motif 5'-GTAACNT-3' in the promoter of target genes (e.g. DD11 and DD18) and promotes their expression within synergid cells (e.g. in the filiform apparatus) in ovules. Required for the formation of the filiform apparatus during synergid cell differentiation in the female gametophyte. Involved in pollen tube guidance to the micropyle. In Arabidopsis thaliana (Mouse-ear cress), this protein is Transcription factor MYB98.